The primary structure comprises 164 residues: Protein-export protein SecB (164 aa).

Belongs to the SecB family. In terms of assembly, homotetramer, a dimer of dimers. One homotetramer interacts with 1 SecA dimer.

It is found in the cytoplasm. Functionally, one of the proteins required for the normal export of preproteins out of the cell cytoplasm. It is a molecular chaperone that binds to a subset of precursor proteins, maintaining them in a translocation-competent state. It also specifically binds to its receptor SecA. This Pseudomonas syringae pv. tomato (strain ATCC BAA-871 / DC3000) protein is Protein-export protein SecB.